Reading from the N-terminus, the 1399-residue chain is Dicer-like protein 2 (1399 aa).

A Helicase ATP-binding domain is found at 18–194 (MVEESMQSNI…EDLQQIERNL (177 aa)). 31–38 (MDTGSGKT) lines the ATP pocket. The DEAH box signature appears at 139 to 142 (DEAH). The Helicase C-terminal domain occupies 364–549 (KLQLLIKFLV…QSETGHRNFE (186 aa)). A Dicer dsRNA-binding fold domain is found at 562 to 656 (ASQHLHHFCS…LPARQEADDE (95 aa)). RNase III domains follow at residues 897–1054 (LPSI…TVGG) and 1094–1270 (LDVL…IDSL). The Mg(2+) site is built by Glu1133, Asp1256, and Glu1259. The 70-residue stretch at 1301 to 1370 (HPKERLGHLA…AWKAVGVLES (70 aa)) folds into the DRBM domain.

Belongs to the helicase family. Dicer subfamily. It depends on Mg(2+) as a cofactor. Mn(2+) is required as a cofactor.

Dicer-like endonuclease involved in cleaving double-stranded RNA in the RNA interference (RNAi) pathway. Produces 21 to 25 bp dsRNAs (siRNAs) which target the selective destruction of homologous RNAs leading to sequence-specific suppression of gene expression, called post-transcriptional gene silencing (PTGS). Part of a broad host defense response against viral infection and transposons. The sequence is that of Dicer-like protein 2 (DCL2) from Phaeosphaeria nodorum (strain SN15 / ATCC MYA-4574 / FGSC 10173) (Glume blotch fungus).